A 134-amino-acid chain; its full sequence is Small ribosomal subunit protein uS11 (134 aa).

This sequence belongs to the universal ribosomal protein uS11 family. As to quaternary structure, part of the 30S ribosomal subunit. Interacts with proteins S7 and S18. Binds to IF-3.

Its function is as follows. Located on the platform of the 30S subunit, it bridges several disparate RNA helices of the 16S rRNA. Forms part of the Shine-Dalgarno cleft in the 70S ribosome. The chain is Small ribosomal subunit protein uS11 from Delftia acidovorans (strain DSM 14801 / SPH-1).